Reading from the N-terminus, the 316-residue chain is MTRHLLTAADLSRDEATAILDDADRFSQALIGREVKKLPTLRGRTVITMFYENSTRTRVSFEVAGKWMSADVINVSASGSSVAKGESLRDTALTLRAAGADALIIRHPASGAAQQLAEWTAAEAGAPSVINAGDGTHEHPTQALLDALTLRQRLGGIEGRRVVIVGDVLHSRVARSNVLLLHTLGAEVVLVAPPTLLPVGVRQWPVTVSHDLDAELPAADAVLMLRVQAERMNGGFFPSAREYSVRYGLSDKRQALLPDSAVVLHPGPMLRGMEISSSVADSSQSAVLQQVSNGVHVRMAVLFHLLVGAEQEAISA.

Residues R56 and T57 each coordinate carbamoyl phosphate. Residue K84 participates in L-aspartate binding. Carbamoyl phosphate contacts are provided by R106, H139, and Q142. The L-aspartate site is built by R172 and R226. Residues G267 and P268 each coordinate carbamoyl phosphate.

It belongs to the aspartate/ornithine carbamoyltransferase superfamily. ATCase family. As to quaternary structure, heterododecamer (2C3:3R2) of six catalytic PyrB chains organized as two trimers (C3), and six regulatory PyrI chains organized as three dimers (R2).

It catalyses the reaction carbamoyl phosphate + L-aspartate = N-carbamoyl-L-aspartate + phosphate + H(+). Its pathway is pyrimidine metabolism; UMP biosynthesis via de novo pathway; (S)-dihydroorotate from bicarbonate: step 2/3. Catalyzes the condensation of carbamoyl phosphate and aspartate to form carbamoyl aspartate and inorganic phosphate, the committed step in the de novo pyrimidine nucleotide biosynthesis pathway. This chain is Aspartate carbamoyltransferase catalytic subunit, found in Mycobacterium sp. (strain MCS).